The chain runs to 174 residues: MGKITFFEDRSFQGRCYECSSDCPNLQTYFSRCNSVRVDSGCWMLYERPNYQGHQYFLRRGEYPDYQQWMGFSDSIRSCRLIPHAGSHRMRLYEKEDHKGVMMELSEDCSCIQDRFHLSEVRSLQVLEGCWVLYEMPNYRGRQYLLRPQEYRRFQDWGSVDAKAGSLRRVVDLY.

Beta/gamma crystallin 'Greek key' domains follow at residues 2-40 (GKIT…RVDS) and 41-83 (GCWM…RLIP). The residue at position 23 (Cys23) is an S-methylcysteine. The tract at residues 84–87 (HAGS) is connecting peptide. Beta/gamma crystallin 'Greek key' domains follow at residues 88-128 (HRMR…QVLE) and 129-171 (GCWV…RRVV).

This sequence belongs to the beta/gamma-crystallin family.

In terms of biological role, crystallins are the dominant structural components of the vertebrate eye lens. The protein is Gamma-crystallin C (Crygc) of Mus musculus (Mouse).